A 139-amino-acid chain; its full sequence is Probable DNA-binding protein (139 aa).

The segment at 97-139 is disordered; that stretch reads DEPSREASPDLGAAGAELEDESAQAGAVQGPETLRSQVLRART.

This chain is Probable DNA-binding protein, found in Homo sapiens (Human).